We begin with the raw amino-acid sequence, 159 residues long: Ribosome maturation factor RimP (159 aa).

The protein belongs to the RimP family.

The protein resides in the cytoplasm. Required for maturation of 30S ribosomal subunits. The polypeptide is Ribosome maturation factor RimP (Geobacter metallireducens (strain ATCC 53774 / DSM 7210 / GS-15)).